Reading from the N-terminus, the 290-residue chain is Ribosomal RNA small subunit methyltransferase A (290 aa).

The S-adenosyl-L-methionine site is built by N27, L29, G54, E75, D100, and N125.

This sequence belongs to the class I-like SAM-binding methyltransferase superfamily. rRNA adenine N(6)-methyltransferase family. RsmA subfamily.

The protein localises to the cytoplasm. It carries out the reaction adenosine(1518)/adenosine(1519) in 16S rRNA + 4 S-adenosyl-L-methionine = N(6)-dimethyladenosine(1518)/N(6)-dimethyladenosine(1519) in 16S rRNA + 4 S-adenosyl-L-homocysteine + 4 H(+). Functionally, specifically dimethylates two adjacent adenosines (A1518 and A1519) in the loop of a conserved hairpin near the 3'-end of 16S rRNA in the 30S particle. May play a critical role in biogenesis of 30S subunits. The chain is Ribosomal RNA small subunit methyltransferase A from Streptococcus agalactiae serotype Ia (strain ATCC 27591 / A909 / CDC SS700).